The following is a 435-amino-acid chain: uncharacterized protein (435 aa).

Serine 47 carries the post-translational modification Phosphoserine. Disordered stretches follow at residues 174–210 and 290–372; these read LKKKKESIKTAQTTEAQGADHNEEDEEDEEDEEDDED and KAEA…EDNK. Residues 195 to 210 are compositionally biased toward acidic residues; the sequence is NEEDEEDEEDEEDDED. The segment covering 290-304 has biased composition (basic and acidic residues); sequence KAEATGEAHSKDVSA. The span at 308 to 318 shows a compositional bias: polar residues; sequence SANTTTSFDET. Basic and acidic residues-rich tracts occupy residues 322 to 340 and 347 to 361; these read EDEKPKSEGAEEESKKEAN and VADRKEDLKSNKVND.

The protein localises to the cytoplasm. This is an uncharacterized protein from Saccharomyces cerevisiae (strain ATCC 204508 / S288c) (Baker's yeast).